The sequence spans 501 residues: Ribulose bisphosphate carboxylase large chain (501 aa).

Substrate contacts are provided by Asn-141 and Thr-191. The active-site Proton acceptor is the Lys-193. Lys-195 lines the substrate pocket. Residues Lys-219, Asp-221, and Glu-222 each contribute to the Mg(2+) site. Lys-219 bears the N6-carboxylysine mark. His-311 (proton acceptor) is an active-site residue. Substrate-binding residues include Arg-312, His-344, and Ser-396.

Belongs to the RuBisCO large chain family. Type I subfamily. As to quaternary structure, heterohexadecamer of 8 large chains and 8 small chains. It depends on Mg(2+) as a cofactor.

It carries out the reaction 2 (2R)-3-phosphoglycerate + 2 H(+) = D-ribulose 1,5-bisphosphate + CO2 + H2O. It catalyses the reaction D-ribulose 1,5-bisphosphate + O2 = 2-phosphoglycolate + (2R)-3-phosphoglycerate + 2 H(+). RuBisCO catalyzes two reactions: the carboxylation of D-ribulose 1,5-bisphosphate, the primary event in carbon dioxide fixation, as well as the oxidative fragmentation of the pentose substrate. Both reactions occur simultaneously and in competition at the same active site. This is Ribulose bisphosphate carboxylase large chain from Paraburkholderia phymatum (strain DSM 17167 / CIP 108236 / LMG 21445 / STM815) (Burkholderia phymatum).